We begin with the raw amino-acid sequence, 515 residues long: Zinc metalloproteinase-disintegrin BA-5A (515 aa).

Residues 1–20 (MMQVLLVTICLAVFPYQGSS) form the signal peptide. Residues 21–193 (IILESGNVND…KEASQLVATS (173 aa)) constitute a propeptide that is removed on maturation. A Peptidase M12B domain is found at 203–399 (RYIKYFIVVD…YKPDCTLIRP (197 aa)). A glycan (N-linked (GlcNAc...) asparagine) is linked at Asn263. Cystine bridges form between Cys314/Cys394, Cys354/Cys378, Cys356/Cys361, Cys410/Cys429, Cys421/Cys439, Cys423/Cys434, Cys433/Cys456, Cys447/Cys453, Cys452/Cys478, Cys465/Cys485, and Cys472/Cys497. His339 lines the Zn(2+) pocket. Residue Glu340 is part of the active site. His343 and His349 together coordinate Zn(2+). An N-linked (GlcNAc...) asparagine glycan is attached at Asn377. The Disintegrin domain occupies 407–493 (PPVCGNDILE…DCPIDHFHRN (87 aa)). Residues 471 to 473 (ECD) carry the D/ECD-tripeptide motif.

The protein belongs to the venom metalloproteinase (M12B) family. P-II subfamily. Monomer. Zn(2+) serves as cofactor. In terms of tissue distribution, expressed by the venom gland.

It is found in the secreted. Its function is as follows. Snake venom zinc metalloprotease that possesses hemorrhagic activity and degrades alpha chain of fibrinogen (FGA). May inhibit alpha-2/beta-1 integrin (ITGA2/ITGB1). This chain is Zinc metalloproteinase-disintegrin BA-5A, found in Bitis arietans (African puff adder).